We begin with the raw amino-acid sequence, 442 residues long: Glutamate-1-semialdehyde 2,1-aminomutase (442 aa).

Lys-282 carries the N6-(pyridoxal phosphate)lysine modification.

The protein belongs to the class-III pyridoxal-phosphate-dependent aminotransferase family. HemL subfamily. Homodimer. It depends on pyridoxal 5'-phosphate as a cofactor.

The protein localises to the cytoplasm. It carries out the reaction (S)-4-amino-5-oxopentanoate = 5-aminolevulinate. Its pathway is porphyrin-containing compound metabolism; protoporphyrin-IX biosynthesis; 5-aminolevulinate from L-glutamyl-tRNA(Glu): step 2/2. This chain is Glutamate-1-semialdehyde 2,1-aminomutase, found in Polaromonas naphthalenivorans (strain CJ2).